Consider the following 363-residue polypeptide: Flagellar P-ring protein 2 (363 aa).

The first 20 residues, 1 to 20 (MKRIVLLLMSVALFSTAAQA), serve as a signal peptide directing secretion.

Belongs to the FlgI family. As to quaternary structure, the basal body constitutes a major portion of the flagellar organelle and consists of four rings (L,P,S, and M) mounted on a central rod.

The protein resides in the periplasm. The protein localises to the bacterial flagellum basal body. Functionally, assembles around the rod to form the L-ring and probably protects the motor/basal body from shearing forces during rotation. This Vibrio parahaemolyticus serotype O3:K6 (strain RIMD 2210633) protein is Flagellar P-ring protein 2 (flgI2).